The primary structure comprises 138 residues: Large ribosomal subunit protein uL16 (138 aa).

A compositionally biased stretch (basic residues) spans 1–15 (MLSPKKVKYRKKQRG). The interval 1–21 (MLSPKKVKYRKKQRGRLSGEA) is disordered.

Belongs to the universal ribosomal protein uL16 family. Part of the 50S ribosomal subunit.

Its function is as follows. Binds 23S rRNA and is also seen to make contacts with the A and possibly P site tRNAs. This is Large ribosomal subunit protein uL16 from Borreliella afzelii (strain PKo) (Borrelia afzelii).